The following is a 337-amino-acid chain: uncharacterized protein (337 aa).

The protein belongs to the NAD(P)-dependent epimerase/dehydratase family.

This is an uncharacterized protein from Escherichia coli (strain K12).